Consider the following 351-residue polypeptide: sn-1 oleoyl-lipid 12-desaturase (351 aa).

A run of 2 helical transmembrane segments spans residues 46 to 66 (WASV…IIYL) and 68 to 88 (WYCL…AFVV). The short motif at 90-94 (HDCGH) is the Histidine box-1 element. A helical transmembrane segment spans residues 102–122 (WVNDLVGHIAFAPLIYPFHSW). Positions 126–130 (HDHHH) match the Histidine box-2 motif. 2 helical membrane-spanning segments follow: residues 199–219 (IAVV…TTGV) and 222–242 (FVKF…TFTI). The Histidine box-3 signature appears at 290–294 (HHLSV).

The protein belongs to the fatty acid desaturase type 2 family. It depends on Fe(2+) as a cofactor.

The protein localises to the membrane. The catalysed reaction is a 1-[(9Z)-octadecenoyl]-2-acyl-glycerolipid + 2 reduced [2Fe-2S]-[ferredoxin] + O2 + 2 H(+) = a 1-[(9Z,12Z)-octadecdienoyl]-2-acyl-glycerolipid + 2 oxidized [2Fe-2S]-[ferredoxin] + 2 H2O. It participates in lipid metabolism; polyunsaturated fatty acid biosynthesis. Desaturase involved in fatty acid biosynthesis. Introduces a double bond at carbon 12 of oleoyl groups (18:1) attached to the sn-1 position of the glycerol moiety of membrane glycerolipids. This enzyme is involved in chilling tolerance because the phase transition temperature of lipids of cellular membranes depends on the degree of unsaturation of fatty acids of the membrane lipids. The chain is sn-1 oleoyl-lipid 12-desaturase from Synechocystis sp. (strain ATCC 27184 / PCC 6803 / Kazusa).